The following is a 428-amino-acid chain: Kynureninase (428 aa).

Residues Thr104, Thr105, 132–135, Asp213, His216, and Tyr238 each bind pyridoxal 5'-phosphate; that span reads FPSD. N6-(pyridoxal phosphate)lysine is present on Lys239. The pyridoxal 5'-phosphate site is built by Trp267 and Thr295.

It belongs to the kynureninase family. Homodimer. Pyridoxal 5'-phosphate is required as a cofactor.

The catalysed reaction is L-kynurenine + H2O = anthranilate + L-alanine + H(+). The enzyme catalyses 3-hydroxy-L-kynurenine + H2O = 3-hydroxyanthranilate + L-alanine + H(+). It functions in the pathway amino-acid degradation; L-kynurenine degradation; L-alanine and anthranilate from L-kynurenine: step 1/1. It participates in cofactor biosynthesis; NAD(+) biosynthesis; quinolinate from L-kynurenine: step 2/3. Catalyzes the cleavage of L-kynurenine (L-Kyn) and L-3-hydroxykynurenine (L-3OHKyn) into anthranilic acid (AA) and 3-hydroxyanthranilic acid (3-OHAA), respectively. The chain is Kynureninase from Geobacillus thermodenitrificans (strain NG80-2).